We begin with the raw amino-acid sequence, 184 residues long: Putative axial regulator YABBY 2 (184 aa).

The C4-type zinc-finger motif lies at 15–42 (CSFCTTILAVSVPYASLFTLVTVRCGHC). 2 stretches are compositionally biased toward polar residues: residues 76-94 (LVTR…NLSE) and 171-184 (LDQS…NGYY). Disordered regions lie at residues 76 to 115 (LVTR…RQRV) and 162 to 184 (LDGN…NGYY).

The protein belongs to the YABBY family. As to quaternary structure, interacts with SPL/NZZ and SPEAR2. In terms of tissue distribution, expressed at low levels in abaxial regions of lateral aerial organ primordia leading to cotyledons, leaves, flower meristems, sepals, petals, stamen and carpels, but not in roots.

It is found in the nucleus. Its function is as follows. Involved in the abaxial cell fate determination during embryogenesis and organogenesis. The sequence is that of Putative axial regulator YABBY 2 (YAB2) from Arabidopsis thaliana (Mouse-ear cress).